A 189-amino-acid chain; its full sequence is Peptidyl-tRNA hydrolase (189 aa).

Tyr14 is a tRNA binding site. Catalysis depends on His19, which acts as the Proton acceptor. 3 residues coordinate tRNA: Tyr64, Asn66, and Asn112.

Belongs to the PTH family. In terms of assembly, monomer.

The protein resides in the cytoplasm. The enzyme catalyses an N-acyl-L-alpha-aminoacyl-tRNA + H2O = an N-acyl-L-amino acid + a tRNA + H(+). Its function is as follows. Hydrolyzes ribosome-free peptidyl-tRNAs (with 1 or more amino acids incorporated), which drop off the ribosome during protein synthesis, or as a result of ribosome stalling. Functionally, catalyzes the release of premature peptidyl moieties from peptidyl-tRNA molecules trapped in stalled 50S ribosomal subunits, and thus maintains levels of free tRNAs and 50S ribosomes. This chain is Peptidyl-tRNA hydrolase, found in Dehalococcoides mccartyi (strain ATCC BAA-2266 / KCTC 15142 / 195) (Dehalococcoides ethenogenes (strain 195)).